A 230-amino-acid polypeptide reads, in one-letter code: Secretory carrier-associated membrane protein 4 (230 aa).

Residues 1 to 39 lie on the Cytoplasmic side of the membrane; sequence MSGKENNFPPLPKFIPLKPCFYQNFSDEIPIEHQVLVKR. A run of 4 helical transmembrane segments spans residues 40–60, 61–81, 105–125, and 149–169; these read IYRL…ACLA, WWIA…LLLF, FMAF…QAVG, and VVML…AVMI. At 170 to 230 the chain is on the cytoplasmic side; sequence MKVHSIYRGT…SYPASGGQWP (61 aa). Position 194 is a phosphothreonine (threonine 194). Residues 208–230 are disordered; sequence FSGNSLPEYPTVPSYPASGGQWP.

Belongs to the SCAMP family.

It is found in the membrane. Functionally, probably involved in membrane protein trafficking. The chain is Secretory carrier-associated membrane protein 4 (SCAMP4) from Bos taurus (Bovine).